Reading from the N-terminus, the 483-residue chain is Glycogen synthase (483 aa).

K15 provides a ligand contact to ADP-alpha-D-glucose.

It belongs to the glycosyltransferase 1 family. Bacterial/plant glycogen synthase subfamily.

It carries out the reaction [(1-&gt;4)-alpha-D-glucosyl](n) + ADP-alpha-D-glucose = [(1-&gt;4)-alpha-D-glucosyl](n+1) + ADP + H(+). It functions in the pathway glycan biosynthesis; glycogen biosynthesis. In terms of biological role, synthesizes alpha-1,4-glucan chains using ADP-glucose. The polypeptide is Glycogen synthase (Desulfatibacillum aliphaticivorans).